Here is a 1382-residue protein sequence, read N- to C-terminus: MKAPAVLAPGILVLLFTLVQKSYGECKEALVKSEMNVNMKYQLPNFTAETPIQNVVLHKHHIYLGAVNYIYVLNDKDLQKVAEYKTGPVLEHPDCSPCQDCSHKANLSGGVWEDNINMALLVDTYYDDQLISCGSVHRGTCQRHILPPSNIADIQSEVHCMYSSQADEEPSQCPDCVVSALGTKVLISEKDRFINFFVGNTINSSDHPDHSLHSISVRRLKETQDGFKFLTDQSYIDVLPEFRDSYPIKYVHAFESNHFIYFLTVQRETLDAQTFHTRIIRFCSVDSGLHSYMEMPLECILTEKRRKRSTREEVFNILQAAYVSKPGAHLAKQIGANLNDDILYGVFAQSKPDSAEPMNRSAVCAFPIKYVNEFFNKIVNKNNVRCLQHFYGPNHEHCFNRTLLRNSSGCEARNDEYRTEFTTALQRVDLFMGQFNQVLLTSISTFIKGDLTIANLGTSEGRFMQVVVSRSGLSTPHVNFRLDSHPVSPEAIVEHPLNQNGYTLVVTGKKITRIPLNGLGCEHFQSCSQCLSAPPFVQCGWCHDRCVHLEECPTGAWTQEVCLPAIYEVFPTSAPLEGGTVLTVCGWDFGFRRNNKFDLKKTKVFLGNESCTLTLSESTTNMLKCTVGPAVNEHFNISIIISNGRGTAQYSTFSYVDPIITSISPSYGPKNGGTLLTLTGKYLNSGNSRHISMGGKTCTLKSVSDSILECYTPAQATATEFPIKLKIDLANREMNSFSYQEDPIVYAIHPTKSFISGGSTITAVGKNLNSVSVLRMVIDVHETRRNFTVACQHRSNSEIICCTTPSLQQLNLQLPLKTKAFFMLDGIHSKYFDLIYVHNPVFKPFEKPVMISIGNENVLEIKGNDIDPEAVKGEVLKVGNKSCETIYSDSKAVLCKVPNDLLKLNNELNIEWKQAVSSTVLGKVIVQPDQNFTGLIAGVISISTIVLLLLGLFLWLKRKKQIKDLGSELVRYDARVHTPHLDRLVSARSVSPTTEMVSNESVDYRATFPEDQFPNSSQNGSCRQVQYPLTDLSPMLTSGDSDISSPLLQNTVHIDLSALNPELVQAVQHVVIGPSSLIVHFNEVIGRGHFGCVYHGTLLDNDDKKIHCAVKSLNRITDIGEVSQFLTEGIIMKDFSHPNVLSLLGICLRSEGSPLVVLPYMKHGDLRNFIRNETHNPTVKDLIGFGLQVAKGMKYLASKKFVHRDLAARNCMLDEKFTVKVADFGLARDMYDKEYYSVHNKTGAKLPVKWMALESLQTQKFTTKSDVWSFGVLLWELMTRGAPPYPDVNTFDITVYLLQGRRLLQPEYCPDPLYEVMLKCWHPRAELRPSFSELVSRISAIFSTFIGEHYVHVNATYVNVKCVAPYPSLLSSQDNIDGEGDT.

A signal peptide spans 1 to 24; it reads MKAPAVLAPGILVLLFTLVQKSYG. The Extracellular portion of the chain corresponds to 25 to 935; that stretch reads ECKEALVKSE…VQPDQNFTGL (911 aa). Residues 27-516 form the Sema domain; the sequence is KEALVKSEMN…TGKKITRIPL (490 aa). An N-linked (GlcNAc...) asparagine glycan is attached at N45. 4 cysteine pairs are disulfide-bonded: C95/C101, C98/C160, C133/C141, and C173/C176. An N-linked (GlcNAc...) asparagine glycan is attached at N106. N-linked (GlcNAc...) asparagine glycosylation is found at N203 and N359. Cystine bridges form between C299–C364 and C386–C398. Residues N400 and N406 are each glycosylated (N-linked (GlcNAc...) asparagine). 4 disulfide bridges follow: C521–C539, C527–C562, C530–C546, and C542–C552. IPT/TIG domains lie at 564–656, 658–740, and 743–837; these read PAIY…FSYV, PIIT…FSYQ, and PIVY…LIYV. Residue T583 is glycosylated (O-linked (Man) threonine). N608 and N636 each carry an N-linked (GlcNAc...) asparagine glycan. 2 O-linked (Man) threonine glycosylation sites follow: T677 and T762. 3 N-linked (GlcNAc...) asparagine glycosylation sites follow: N786, N880, and N931. Residues 936 to 956 form a helical membrane-spanning segment; it reads IAGVISISTIVLLLLGLFLWL. Residues 957 to 1379 lie on the Cytoplasmic side of the membrane; that stretch reads KRKKQIKDLG…LSSQDNIDGE (423 aa). Position 967 is a phosphoserine (S967). A Phosphothreonine modification is found at T978. A phosphoserine mark is found at S991, S998, and S1001. Y1004 is modified (phosphotyrosine). Residues 1079–1346 form the Protein kinase domain; sequence VHFNEVIGRG…RISAIFSTFI (268 aa). ATP-binding positions include 1085-1093 and K1111; that span reads IGRGHFGCV. D1205 (proton acceptor) is an active-site residue. The tract at residues 1213-1382 is interaction with RANBP9; the sequence is LDEKFTVKVA…QDNIDGEGDT (170 aa). Phosphotyrosine is present on Y1231. Y1235 and Y1236 each carry phosphotyrosine; by autocatalysis. T1290 carries the post-translational modification Phosphothreonine. The interval 1321–1360 is interaction with MUC20; it reads WHPRAELRPSFSELVSRISAIFSTFIGEHYVHVNATYVNV. Y1350 and Y1357 each carry phosphotyrosine; by autocatalysis. Y1366 is modified (phosphotyrosine).

This sequence belongs to the protein kinase superfamily. Tyr protein kinase family. In terms of assembly, heterodimer made of an alpha chain (50 kDa) and a beta chain (145 kDa) which are disulfide linked. Binds PLXNB1. Interacts when phosphorylated with downstream effectors including STAT3, PIK3R1, SRC, PCLG1, GRB2 and GAB1. Interacts with SPSB1, SPSB2 and SPSB4. Interacts with INPP5D/SHIP1. When phosphorylated at Tyr-1357, interacts with INPPL1/SHIP2. Interacts with RANBP9 and RANBP10, as well as SPSB1, SPSB2, SPSB3 and SPSB4. SPSB1 binding occurs in the presence and in the absence of HGF, however HGF treatment has a positive effect on this interaction. Interacts with MUC20; prevents interaction with GRB2 and suppresses hepatocyte growth factor-induced cell proliferation. Interacts with GRB10. Interacts with PTPN1 and PTPN2. Interacts with HSP90AA1 and HSP90AB1; the interaction suppresses MET kinase activity. Interacts with tensin TNS3. Interacts (when phosphorylated) with tensin TNS4 (via SH2 domain); the interaction increases MET protein stability by inhibiting MET endocytosis and subsequent lysosomal degradation. (Microbial infection) Interacts with L.monocytogenes InlB. InlB probably dimerizes upon binding to MET, which encourages subsequent dimerization of MET. Post-translationally, autophosphorylated in response to ligand binding on Tyr-1235 and Tyr-1236 in the kinase domain leading to further phosphorylation of Tyr-1350 and Tyr-1357 in the C-terminal multifunctional docking site. Dephosphorylated by PTPRJ at Tyr-1350 and Tyr-1366. Dephosphorylated by PTPN1 and PTPN2. In terms of processing, ubiquitinated. Ubiquitination by CBL regulates the receptor stability and activity through proteasomal degradation. (Microbial infection) Tyrosine phosphorylation is stimulated by L.monocytogenes InlB. Post-translationally, O-mannosylation of IPT/TIG domains by TMEM260 is required for protein maturation. O-mannosylated residues are composed of single mannose glycans that are not elongated or modified.

It localises to the membrane. It catalyses the reaction L-tyrosyl-[protein] + ATP = O-phospho-L-tyrosyl-[protein] + ADP + H(+). Its activity is regulated as follows. In its inactive state, the C-terminal tail interacts with the catalytic domain and inhibits the kinase activity. Upon ligand binding, the C-terminal tail is displaced and becomes phosphorylated, thus increasing the kinase activity. Functionally, receptor tyrosine kinase that transduces signals from the extracellular matrix into the cytoplasm by binding to hepatocyte growth factor/HGF ligand. Regulates many physiological processes including proliferation, scattering, morphogenesis and survival. Ligand binding at the cell surface induces autophosphorylation of MET on its intracellular domain that provides docking sites for downstream signaling molecules. Following activation by ligand, interacts with the PI3-kinase subunit PIK3R1, PLCG1, SRC, GRB2, STAT3 or the adapter GAB1. Recruitment of these downstream effectors by MET leads to the activation of several signaling cascades including the RAS-ERK, PI3 kinase-AKT, or PLCgamma-PKC. The RAS-ERK activation is associated with the morphogenetic effects while PI3K/AKT coordinates prosurvival effects. During embryonic development, MET signaling plays a role in gastrulation, development and migration of muscles and neuronal precursors, angiogenesis and kidney formation. In adults, participates in wound healing as well as organ regeneration and tissue remodeling. Also promotes differentiation and proliferation of hematopoietic cells. In terms of biological role, (Microbial infection) Acts as a receptor for Listeria monocytogenes internalin InlB, mediating entry of the pathogen into cells. The chain is Hepatocyte growth factor receptor (MET) from Canis lupus familiaris (Dog).